Here is a 145-residue protein sequence, read N- to C-terminus: Basic phospholipase A2 PC17 (145 aa).

Positions 1–21 (MYPAHLLVLLAVCVSLLGASA) are cleaved as a signal peptide. A propeptide spanning residues 22-27 (ISNQPR) is cleaved from the precursor. Disulfide bonds link cysteine 38–cysteine 98, cysteine 54–cysteine 144, cysteine 56–cysteine 72, cysteine 71–cysteine 125, cysteine 78–cysteine 118, cysteine 87–cysteine 111, and cysteine 105–cysteine 116. Residues tyrosine 55, glycine 57, and glycine 59 each contribute to the Ca(2+) site. The active site involves histidine 75. Residue aspartate 76 participates in Ca(2+) binding. Aspartate 119 is a catalytic residue.

Belongs to the phospholipase A2 family. Group I subfamily. D49 sub-subfamily. Requires Ca(2+) as cofactor. Expressed by the venom gland.

It is found in the secreted. It catalyses the reaction a 1,2-diacyl-sn-glycero-3-phosphocholine + H2O = a 1-acyl-sn-glycero-3-phosphocholine + a fatty acid + H(+). Snake venom phospholipase A2 (PLA2) that inhibits neuromuscular transmission by blocking acetylcholine release from the nerve termini. PLA2 catalyzes the calcium-dependent hydrolysis of the 2-acyl groups in 3-sn-phosphoglycerides. The chain is Basic phospholipase A2 PC17 from Laticauda colubrina (Yellow-lipped sea krait).